Here is a 115-residue protein sequence, read N- to C-terminus: Large ribosomal subunit protein eL30 (115 aa).

Phosphoserine occurs at positions 10 and 16. An N6-acetyllysine; alternate modification is found at lysine 26. A Glycyl lysine isopeptide (Lys-Gly) (interchain with G-Cter in SUMO2); alternate cross-link involves residue lysine 26.

Belongs to the eukaryotic ribosomal protein eL30 family. As to quaternary structure, component of the large ribosomal subunit.

It localises to the cytoplasm. Functionally, component of the large ribosomal subunit. The ribosome is a large ribonucleoprotein complex responsible for the synthesis of proteins in the cell. The chain is Large ribosomal subunit protein eL30 (RPL30) from Oryctolagus cuniculus (Rabbit).